The sequence spans 275 residues: MAIVKCKPTSPGRRHLVKVVNNDLHKGKPFAALLESKSKSGGRNNGGRITVRHIGGGHKQHYRIVDFKRNKDGIPAKVERLEYDPNRSANIALVLYSDGERRYILAPKGLVAGDQIISGEDASIKVGNCLPMRNIPVGTTVHAVEMKPAKGAQIARSAGAYSQIVARDGAYVTLRLRSGEMRKIPTECRATIGEVGNAEHMLRQLGKAGATRWRGVRPTVRGVVMNPVDHPHGGGEGKSSGGRHPVSPWGMPTKGYKTRKNKGTDQYIVRRRNKK.

Positions 223-275 (VVMNPVDHPHGGGEGKSSGGRHPVSPWGMPTKGYKTRKNKGTDQYIVRRRNKK) are disordered.

This sequence belongs to the universal ribosomal protein uL2 family. As to quaternary structure, part of the 50S ribosomal subunit. Forms a bridge to the 30S subunit in the 70S ribosome.

One of the primary rRNA binding proteins. Required for association of the 30S and 50S subunits to form the 70S ribosome, for tRNA binding and peptide bond formation. It has been suggested to have peptidyltransferase activity; this is somewhat controversial. Makes several contacts with the 16S rRNA in the 70S ribosome. In Psychromonas ingrahamii (strain DSM 17664 / CCUG 51855 / 37), this protein is Large ribosomal subunit protein uL2.